The primary structure comprises 308 residues: Tetraacyldisaccharide 4'-kinase (308 aa).

63 to 70 (SFGGNGKT) contributes to the ATP binding site.

This sequence belongs to the LpxK family.

It carries out the reaction a lipid A disaccharide + ATP = a lipid IVA + ADP + H(+). It participates in glycolipid biosynthesis; lipid IV(A) biosynthesis; lipid IV(A) from (3R)-3-hydroxytetradecanoyl-[acyl-carrier-protein] and UDP-N-acetyl-alpha-D-glucosamine: step 6/6. Transfers the gamma-phosphate of ATP to the 4'-position of a tetraacyldisaccharide 1-phosphate intermediate (termed DS-1-P) to form tetraacyldisaccharide 1,4'-bis-phosphate (lipid IVA). The chain is Tetraacyldisaccharide 4'-kinase from Campylobacter jejuni subsp. jejuni serotype O:6 (strain 81116 / NCTC 11828).